Consider the following 339-residue polypeptide: Cathepsin L (339 aa).

The first 17 residues, 1-17 (MRTVLVALLALVALTQA), serve as a signal peptide directing secretion. Positions 18–121 (ISPLDLIKEE…ATYIPPAHVT (104 aa)) are cleaved as a propeptide — activation peptide. N-linked (GlcNAc...) asparagine glycosylation is present at asparagine 96. Cystine bridges form between cysteine 143–cysteine 186, cysteine 177–cysteine 219, and cysteine 278–cysteine 328. Cysteine 146 is a catalytic residue. Residue histidine 285 is part of the active site. Positions 295–298 (DESG) are excised as a propeptide. Asparagine 306 is a catalytic residue.

The protein belongs to the peptidase C1 family. As to quaternary structure, dimer of a heavy and a light chain linked by disulfide bonds.

The protein resides in the lysosome. It carries out the reaction Specificity close to that of papain. As compared to cathepsin B, cathepsin L exhibits higher activity toward protein substrates, but has little activity on Z-Arg-Arg-NHMec, and no peptidyl-dipeptidase activity.. Functionally, important for the overall degradation of proteins in lysosomes. Required for differentiation of imaginal disks. The protein is Cathepsin L of Sarcophaga peregrina (Flesh fly).